A 170-amino-acid polypeptide reads, in one-letter code: Ribosome maturation factor RimM (170 aa).

The 73-residue stretch at 98-170 (PDEYYWVDLE…LIVVDWDPDF (73 aa)) folds into the PRC barrel domain.

It belongs to the RimM family. In terms of assembly, binds ribosomal protein uS19.

The protein localises to the cytoplasm. In terms of biological role, an accessory protein needed during the final step in the assembly of 30S ribosomal subunit, possibly for assembly of the head region. Essential for efficient processing of 16S rRNA. May be needed both before and after RbfA during the maturation of 16S rRNA. It has affinity for free ribosomal 30S subunits but not for 70S ribosomes. This is Ribosome maturation factor RimM from Xanthomonas axonopodis pv. citri (strain 306).